The sequence spans 487 residues: Malonate-semialdehyde dehydrogenase 3 (487 aa).

Positions 154, 178, 181, 182, and 231 each coordinate NAD(+). Cys-286 (nucleophile) is an active-site residue. Glu-386 serves as a coordination point for NAD(+).

The protein belongs to the aldehyde dehydrogenase family. IolA subfamily. As to quaternary structure, homotetramer.

The catalysed reaction is 3-oxopropanoate + NAD(+) + CoA + H2O = hydrogencarbonate + acetyl-CoA + NADH + H(+). It catalyses the reaction 2-methyl-3-oxopropanoate + NAD(+) + CoA + H2O = propanoyl-CoA + hydrogencarbonate + NADH + H(+). Its pathway is polyol metabolism; myo-inositol degradation into acetyl-CoA; acetyl-CoA from myo-inositol: step 7/7. Its function is as follows. Catalyzes the oxidation of malonate semialdehyde (MSA) and methylmalonate semialdehyde (MMSA) into acetyl-CoA and propanoyl-CoA, respectively. Is involved in a myo-inositol catabolic pathway. Bicarbonate, and not CO2, is the end-product of the enzymatic reaction. The polypeptide is Malonate-semialdehyde dehydrogenase 3 (Bacillus cereus (strain ZK / E33L)).